A 344-amino-acid polypeptide reads, in one-letter code: MPMQGAQRKLLGSLNSTPTATSNLGLAANHTGAPCLEVSIPDGLFLSLGLVSLVENVLVVAAIAKNRNLHSSMYCFICCLALSDLLVSGSNMLETAIILLLEAGTLATRASVVQQLHNTIDVLTCSSMLCSLCFLGAIAVDRYISIFYALRYHSIMTLPRAQRAIAAIWVTSVLSSTLFITYYDHAAVLLCLVVFFLAMLVLMAVLYVHMLARACQHAQGIIRLHNRQLPAHKGFGLRGAATLTILLGIFFLCWGPFFLHLTLVVFCPQHLTCNCIFKNFKVFLTLIICNTIIDPLIYAFRSQELRRTLKEVLLCSWWPGCGAEGGGDSVWPGSCVTLRGPLPP.

At 1–37 (MPMQGAQRKLLGSLNSTPTATSNLGLAANHTGAPCLE) the chain is on the extracellular side. An N-linked (GlcNAc...) asparagine glycan is attached at asparagine 29. Residues 38–63 (VSIPDGLFLSLGLVSLVENVLVVAAI) traverse the membrane as a helical segment. Over 64 to 72 (AKNRNLHSS) the chain is Cytoplasmic. A helical membrane pass occupies residues 73-93 (MYCFICCLALSDLLVSGSNML). The Extracellular portion of the chain corresponds to 94-118 (ETAIILLLEAGTLATRASVVQQLHN). The chain crosses the membrane as a helical span at residues 119–140 (TIDVLTCSSMLCSLCFLGAIAV). Residues 141–163 (DRYISIFYALRYHSIMTLPRAQR) are Cytoplasmic-facing. A helical transmembrane segment spans residues 164-183 (AIAAIWVTSVLSSTLFITYY). At 184 to 191 (DHAAVLLC) the chain is on the extracellular side. Residues 192 to 211 (LVVFFLAMLVLMAVLYVHML) form a helical membrane-spanning segment. Residues 212–240 (ARACQHAQGIIRLHNRQLPAHKGFGLRGA) are Cytoplasmic-facing. Residues 241–266 (ATLTILLGIFFLCWGPFFLHLTLVVF) form a helical membrane-spanning segment. Residues 267–279 (CPQHLTCNCIFKN) lie on the Extracellular side of the membrane. Residues 280–300 (FKVFLTLIICNTIIDPLIYAF) traverse the membrane as a helical segment. Topologically, residues 301–344 (RSQELRRTLKEVLLCSWWPGCGAEGGGDSVWPGSCVTLRGPLPP) are cytoplasmic. A lipid anchor (S-palmitoyl cysteine) is attached at cysteine 315.

The protein belongs to the G-protein coupled receptor 1 family. In terms of assembly, interacts with MGRN1, but does not undergo MGRN1-mediated ubiquitination; this interaction competes with GNAS-binding and thus inhibits agonist-induced cAMP production. Interacts with OPN3; the interaction results in a decrease in MC1R-mediated cAMP signaling and ultimately a decrease in melanin production in melanocytes.

Its subcellular location is the cell membrane. Receptor for MSH (alpha, beta and gamma) and ACTH. The activity of this receptor is mediated by G proteins which activate adenylate cyclase. Mediates melanogenesis, the production of eumelanin (black/brown) and phaeomelanin (red/yellow), via regulation of cAMP signaling in melanocytes. The polypeptide is Melanocyte-stimulating hormone receptor (MC1R) (Mico argentatus (Silvery marmoset)).